Here is a 72-residue protein sequence, read N- to C-terminus: DNA-directed RNA polymerase subunit epsilon (72 aa).

Belongs to the RNA polymerase subunit epsilon family. RNAP is composed of a core of 2 alpha, a beta and a beta' subunit. The core is associated with a delta subunit, and at least one of epsilon or omega. When a sigma factor is associated with the core the holoenzyme is formed, which can initiate transcription.

The catalysed reaction is RNA(n) + a ribonucleoside 5'-triphosphate = RNA(n+1) + diphosphate. Its function is as follows. A non-essential component of RNA polymerase (RNAP). In Staphylococcus aureus (strain JH1), this protein is DNA-directed RNA polymerase subunit epsilon.